A 469-amino-acid chain; its full sequence is Probable cobyric acid synthase (469 aa).

A GATase cobBQ-type domain is found at 241–427 (SGSIGIVRYP…VHGILENNEF (187 aa)). Cysteine 319 acts as the Nucleophile in catalysis. Residue histidine 419 is part of the active site.

This sequence belongs to the CobB/CobQ family. CobQ subfamily.

It participates in cofactor biosynthesis; adenosylcobalamin biosynthesis. Functionally, catalyzes amidations at positions B, D, E, and G on adenosylcobyrinic A,C-diamide. NH(2) groups are provided by glutamine, and one molecule of ATP is hydrogenolyzed for each amidation. This chain is Probable cobyric acid synthase, found in Picrophilus torridus (strain ATCC 700027 / DSM 9790 / JCM 10055 / NBRC 100828 / KAW 2/3).